The chain runs to 64 residues: Movement protein TGBp3 (64 aa).

At Met-1–Val-4 the chain is on the lumenal side. A helical membrane pass occupies residues Ala-5 to Pro-27. Residues Glu-28–Leu-64 lie on the Cytoplasmic side of the membrane.

The protein belongs to the Tymovirales TGBp3 protein family.

It localises to the host endoplasmic reticulum membrane. In terms of biological role, plays a role in viral cell-to-cell propagation, by facilitating genome transport to neighboring plant cells through plasmosdesmata. May induce the formation of granular vesicles derived from the Endoplasmic reticulum, which align on actin filaments. This chain is Movement protein TGBp3, found in Lily symptomless virus (LSV).